Here is a 291-residue protein sequence, read N- to C-terminus: Bifunctional protein FolD (291 aa).

NADP(+)-binding positions include 165–167 (GRS), Ser-190, and Ile-231.

This sequence belongs to the tetrahydrofolate dehydrogenase/cyclohydrolase family. Homodimer.

It catalyses the reaction (6R)-5,10-methylene-5,6,7,8-tetrahydrofolate + NADP(+) = (6R)-5,10-methenyltetrahydrofolate + NADPH. The catalysed reaction is (6R)-5,10-methenyltetrahydrofolate + H2O = (6R)-10-formyltetrahydrofolate + H(+). It participates in one-carbon metabolism; tetrahydrofolate interconversion. Functionally, catalyzes the oxidation of 5,10-methylenetetrahydrofolate to 5,10-methenyltetrahydrofolate and then the hydrolysis of 5,10-methenyltetrahydrofolate to 10-formyltetrahydrofolate. The polypeptide is Bifunctional protein FolD (Azoarcus sp. (strain BH72)).